Reading from the N-terminus, the 101-residue chain is Apolipoprotein C-II (101 aa).

A signal peptide spans Met-1–Gly-22. The tract at residues Thr-66–Met-74 is lipid binding. The interval Ser-78–Asp-101 is lipoprotein lipase cofactor.

The protein belongs to the apolipoprotein C2 family. Post-translationally, proapolipoprotein C-II is synthesized as a sialic acid containing glycoprotein which is subsequently desialylated prior to its proteolytic processing. Proapolipoprotein C-II, the major form found in plasma undergoes proteolytic cleavage of its N-terminal hexapeptide to generate apolipoprotein C-II, which occurs as the minor form in plasma.

It is found in the secreted. In terms of biological role, component of chylomicrons, very low-density lipoproteins (VLDL), low-density lipoproteins (LDL), and high-density lipoproteins (HDL) in plasma. Plays an important role in lipoprotein metabolism as an activator of lipoprotein lipase. Both proapolipoprotein C-II and apolipoprotein C-II can activate lipoprotein lipase. The protein is Apolipoprotein C-II (APOC2) of Tapirus terrestris (Lowland tapir).